A 126-amino-acid chain; its full sequence is Arginine decarboxylase proenzyme (126 aa).

Ser-74 (schiff-base intermediate with substrate; via pyruvic acid) is an active-site residue. Ser-74 is modified (pyruvic acid (Ser); by autocatalysis). Catalysis depends on His-79, which acts as the Proton acceptor; for processing activity. Catalysis depends on Cys-94, which acts as the Proton donor; for catalytic activity.

It belongs to the prokaryotic AdoMetDC family. Type 1 subfamily. In terms of assembly, heterooctamer of four alpha and four beta chains arranged as a tetramer of alpha/beta heterodimers. It depends on pyruvate as a cofactor. Post-translationally, is synthesized initially as an inactive proenzyme. Formation of the active enzyme involves a self-maturation process in which the active site pyruvoyl group is generated from an internal serine residue via an autocatalytic post-translational modification. Two non-identical subunits are generated from the proenzyme in this reaction, and the pyruvate is formed at the N-terminus of the alpha chain, which is derived from the carboxyl end of the proenzyme. The post-translation cleavage follows an unusual pathway, termed non-hydrolytic serinolysis, in which the side chain hydroxyl group of the serine supplies its oxygen atom to form the C-terminus of the beta chain, while the remainder of the serine residue undergoes an oxidative deamination to produce ammonia and the pyruvoyl group blocking the N-terminus of the alpha chain.

The enzyme catalyses L-arginine + H(+) = agmatine + CO2. The protein operates within amine and polyamine biosynthesis; agmatine biosynthesis; agmatine from L-arginine: step 1/1. In terms of biological role, specifically catalyzes the decarboxylation of L-arginine to agmatine. Has no S-adenosylmethionine decarboxylase (AdoMetDC) activity. The protein is Arginine decarboxylase proenzyme of Pyrobaculum neutrophilum (strain DSM 2338 / JCM 9278 / NBRC 100436 / V24Sta) (Thermoproteus neutrophilus).